The sequence spans 65 residues: MFITNILLKKAKSKNILVLMESAVSGHQFTMIRERLADKLELQRFDPYIQKMCLYRERKRLRSLN.

It belongs to the bacterial ribosomal protein bL33 family. In terms of assembly, component of the mitochondrial ribosome large subunit (39S) which comprises a 16S rRNA and about 50 distinct proteins.

The protein resides in the mitochondrion. In Anopheles gambiae (African malaria mosquito), this protein is Large ribosomal subunit protein bL33m (mRpL33).